The sequence spans 706 residues: Transmembrane 9 superfamily member 3 (706 aa).

The signal sequence occupies residues 1–33; that stretch reads MRVRPKRSVITLMAIVVVMLILRNQFYSSRTRG. At 34–290 the chain is on the lumenal side; sequence HGQEPVISSS…LSDEQSIQFH (257 aa). Residues 291 to 311 form a helical membrane-spanning segment; it reads WMSLANSVGIVLSISFITLII. Residues 312–371 lie on the Cytoplasmic side of the membrane; it reads YVRVMYTDKSNSKSPKYMINIEGIETEDDLDDDKYGKYSVYTVAKDWIQNGRPNLFGLKV. The helical transmembrane segment at 372–392 threads the bilayer; the sequence is LILLVSFGVQFLFTIIGSLTI. At 393–405 the chain is on the lumenal side; sequence SCSMNKLHNVRNS. Residues 406–426 traverse the membrane as a helical segment; sequence VLTMAILFFVLGAFMASFVGT. Residues 427-456 are Cytoplasmic-facing; the sequence is RLSMVTKTKRTKANYLDDNRYLKDYKKFSP. A helical transmembrane segment spans residues 457-477; that stretch reads IFTILCGSSLPGIVMVSTFLL. At 478-494 the chain is on the lumenal side; that stretch reads NSIVWAHDSTSALPFKT. The helical transmembrane segment at 495 to 515 threads the bilayer; sequence IVFFMSIYFIVCIPLSLFGGI. Residues 516–553 lie on the Cytoplasmic side of the membrane; the sequence is VANNIPLPQYWLSGITKDESNSDGNGLFVPKSRAKFNP. A helical transmembrane segment spans residues 554-574; sequence LVYCGIYLCGIFPLLVIYVEM. Residues 575 to 592 are Lumenal-facing; the sequence is QYVYKSLWLEKTTFYYFY. A helical membrane pass occupies residues 593-613; the sequence is GFLFLSIILLCVLTMEISIIG. The Cytoplasmic portion of the chain corresponds to 614-637; sequence SYLLMRFCFEDKVVRNNWRWKCFE. A helical membrane pass occupies residues 638 to 658; that stretch reads MGFSGGVYMELYSLYYIFAVL. The Lumenal portion of the chain corresponds to 659-665; sequence NIHGFSS. Residues 666–686 form a helical membrane-spanning segment; sequence ILISICYSLIFNVMCSLGLGA. Topologically, residues 687–706 are cytoplasmic; it reads LSYLTASWFINKIYHQKVNL.

This sequence belongs to the nonaspanin (TM9SF) (TC 9.A.2) family.

Its subcellular location is the golgi apparatus membrane. In terms of biological role, with EMP70 and TMN2, plays a critical role in the late stages of a nutrient-controlled pathway notably regulating FLO11 gene expression. Acts downstream of RAS2 and TOR. Essential for cell adhesion and filamentous growth. May play a role as effector of cellular copper homeostasis. The chain is Transmembrane 9 superfamily member 3 (TMN3) from Saccharomyces cerevisiae (strain ATCC 204508 / S288c) (Baker's yeast).